A 296-amino-acid chain; its full sequence is Large ribosomal subunit protein uL18B (296 aa).

Residues 251-296 (PVHEKKPKKEVKKKRWNRAKLSLEQKKDRVAQKKASFLRAQEKADS) are disordered. Residues 255-268 (KKPKKEVKKKRWNR) are compositionally biased toward basic residues. A compositionally biased stretch (basic and acidic residues) spans 271-281 (LSLEQKKDRVA).

It belongs to the universal ribosomal protein uL18 family. Component of the large ribosomal subunit (LSU). Part of a LSU subcomplex, the 5S RNP which is composed of the 5S RNA, RPL5 and RPL11.

The protein resides in the cytoplasm. It localises to the nucleus. Its subcellular location is the nucleolus. Functionally, component of the ribosome, a large ribonucleoprotein complex responsible for the synthesis of proteins in the cell. The small ribosomal subunit (SSU) binds messenger RNAs (mRNAs) and translates the encoded message by selecting cognate aminoacyl-transfer RNA (tRNA) molecules. The large subunit (LSU) contains the ribosomal catalytic site termed the peptidyl transferase center (PTC), which catalyzes the formation of peptide bonds, thereby polymerizing the amino acids delivered by tRNAs into a polypeptide chain. The nascent polypeptides leave the ribosome through a tunnel in the LSU and interact with protein factors that function in enzymatic processing, targeting, and the membrane insertion of nascent chains at the exit of the ribosomal tunnel. As part of the 5S RNP/5S ribonucleoprotein particle it is an essential component of the LSU, required for its formation and the maturation of rRNAs. It also couples ribosome biogenesis to p53/TP53 activation. As part of the 5S RNP it accumulates in the nucleoplasm and inhibits MDM2, when ribosome biogenesis is perturbed, mediating the stabilization and the activation of TP53. This Xenopus laevis (African clawed frog) protein is Large ribosomal subunit protein uL18B (rpl5-b).